A 413-amino-acid polypeptide reads, in one-letter code: Histidine--tRNA ligase (413 aa).

The protein belongs to the class-II aminoacyl-tRNA synthetase family. Homodimer.

It localises to the cytoplasm. It carries out the reaction tRNA(His) + L-histidine + ATP = L-histidyl-tRNA(His) + AMP + diphosphate + H(+). The polypeptide is Histidine--tRNA ligase (Neorickettsia sennetsu (strain ATCC VR-367 / Miyayama) (Ehrlichia sennetsu)).